We begin with the raw amino-acid sequence, 210 residues long: Ras-related protein RABC2a (210 aa).

Residue 20–27 (GDSGVGKS) coordinates GTP. The short motif at 41–49 (LAPTIGVDF) is the Effector region element. Residues 67–71 (DTAGQ), 127–130 (NKVD), and 157–158 (SA) each bind GTP. 2 S-geranylgeranyl cysteine lipidation sites follow: Cys208 and Cys209.

This sequence belongs to the small GTPase superfamily. Rab family. In terms of assembly, interacts with XI-2/MYA2.

The protein resides in the cell membrane. The protein localises to the cytoplasm. Functionally, intracellular vesicle trafficking and protein transport. This Arabidopsis thaliana (Mouse-ear cress) protein is Ras-related protein RABC2a (RABC2A).